Here is a 475-residue protein sequence, read N- to C-terminus: Ribosomal protein uS12 methylthiotransferase RimO (475 aa).

Residues 5 to 114 enclose the MTTase N-terminal domain; the sequence is RTVRLIRLGC…IAQRLEDVLA (110 aa). 6 residues coordinate [4Fe-4S] cluster: Cys14, Cys49, Cys78, Cys174, Cys178, and Cys181. Residues 160 to 390 form the Radical SAM core domain; it reads LDDSPVAPLK…AGIAEEVTAD (231 aa). Positions 393-461 constitute a TRAM domain; sequence RARLGETVDV…GVDFLAAPVT (69 aa).

Belongs to the methylthiotransferase family. RimO subfamily. The cofactor is [4Fe-4S] cluster.

The protein localises to the cytoplasm. The catalysed reaction is L-aspartate(89)-[ribosomal protein uS12]-hydrogen + (sulfur carrier)-SH + AH2 + 2 S-adenosyl-L-methionine = 3-methylsulfanyl-L-aspartate(89)-[ribosomal protein uS12]-hydrogen + (sulfur carrier)-H + 5'-deoxyadenosine + L-methionine + A + S-adenosyl-L-homocysteine + 2 H(+). In terms of biological role, catalyzes the methylthiolation of an aspartic acid residue of ribosomal protein uS12. The protein is Ribosomal protein uS12 methylthiotransferase RimO of Acidothermus cellulolyticus (strain ATCC 43068 / DSM 8971 / 11B).